Consider the following 531-residue polypeptide: Doublesex- and mab-3-related transcription factor A2 (531 aa).

The DM DNA-binding region spans 69–116; it reads CARCRNHGVVSALKGHKRYCRWKDCLCAKCTLIAERQRVMAAQVALRR. The tract at residues 197 to 312 is disordered; that stretch reads LQAGRPDSPQ…GGPGPRQRTP (116 aa). Residues 274-285 are compositionally biased toward low complexity; that stretch reads PGSSSPLGSESG. Residues 310–345 form the DMA domain; that stretch reads RTPLDILTRVFPGHRRGVLELVLQGCGGDVVQAIEQ.

This sequence belongs to the DMRT family. In terms of tissue distribution, expressed in adult brain and testis, as well as in embryonic ovary, kidney, heart, lung, stomach and brain.

It localises to the nucleus. Functionally, may be involved in sexual development. This chain is Doublesex- and mab-3-related transcription factor A2 (Dmrta2), found in Mus musculus (Mouse).